The chain runs to 146 residues: UPF0260 protein Sden_1632 (146 aa).

Belongs to the UPF0260 family.

The protein is UPF0260 protein Sden_1632 of Shewanella denitrificans (strain OS217 / ATCC BAA-1090 / DSM 15013).